Here is a 583-residue protein sequence, read N- to C-terminus: Arginine--tRNA ligase (583 aa).

Positions 121 to 131 match the 'HIGH' region motif; the sequence is ANPTGPLHLGH.

Belongs to the class-I aminoacyl-tRNA synthetase family. Monomer.

It localises to the cytoplasm. It catalyses the reaction tRNA(Arg) + L-arginine + ATP = L-arginyl-tRNA(Arg) + AMP + diphosphate. This is Arginine--tRNA ligase (argS) from Aquifex aeolicus (strain VF5).